We begin with the raw amino-acid sequence, 246 residues long: MKISLKTDIGQKRSNNQDFINKFDNKKGITLVILADGMGGHRAGNIASEMTVTDLGREWVKTDFTELSQIRDWLFETIQSENQRIYDLGQSEDFKGMGTTVEAVALVESSAIYAHIGDSRIGLVHDGHYTLLTSDHSLVNELVKAGQITEEEAASHPQRNIITQSIGQASPVEPDLGVRVLEPGDYLVINSDGLTNMISNDEIVTILGSKVSLDEKNQEMIDLANLRGGLDNITIALVHNESEDVE.

In terms of domain architecture, PPM-type phosphatase spans 2 to 240 (KISLKTDIGQ…DNITIALVHN (239 aa)). Residues aspartate 36, glycine 37, aspartate 192, and aspartate 231 each coordinate Mn(2+).

Requires Mg(2+) as cofactor. Mn(2+) is required as a cofactor.

It catalyses the reaction O-phospho-L-seryl-[protein] + H2O = L-seryl-[protein] + phosphate. The enzyme catalyses O-phospho-L-threonyl-[protein] + H2O = L-threonyl-[protein] + phosphate. The chain is Putative protein phosphatase 2C-type from Streptococcus pyogenes serotype M6 (strain ATCC BAA-946 / MGAS10394).